Reading from the N-terminus, the 101-residue chain is MCSSPSAPTAEPDVEMDVHTVSSENLPWLCIVWDDPVNLMSYVTYVFQTVLGYSRKRANELMMQVHTEGKAVVSSGEKDKVEGDVKKLHVAGLWATMQQAG.

It belongs to the ClpS family. As to quaternary structure, binds to the N-terminal domain of the chaperone ClpA.

Functionally, involved in the modulation of the specificity of the ClpAP-mediated ATP-dependent protein degradation. The polypeptide is ATP-dependent Clp protease adapter protein ClpS (Corynebacterium efficiens (strain DSM 44549 / YS-314 / AJ 12310 / JCM 11189 / NBRC 100395)).